The following is a 141-amino-acid chain: Plasmatocyte-spreading peptide (141 aa).

An N-terminal signal peptide occupies residues 1-22 (MKLTINILFCLILISQYNSANG). A propeptide spanning residues 23-118 (NLRDLFNNVR…ATGGKDDKGR (96 aa)) is cleaved from the precursor. Over residues 46–58 (VKTLFHPSDKSGN) the composition is skewed to basic and acidic residues. The tract at residues 46–118 (VKTLFHPSDK…ATGGKDDKGR (73 aa)) is disordered. Over residues 83-98 (PVAVTPAPVVSTTTQA) the composition is skewed to low complexity. Over residues 99–108 (SAPTVATNGT) the composition is skewed to polar residues. Cysteine 125 and cysteine 137 form a disulfide bridge.

This sequence belongs to the GBP/PSP1/paralytic peptide family.

Mediates the spreading of plasmatocytes to foreign surfaces. Plasmocytes are a class of hemocytes involved in insect cellular immunity. This chain is Plasmatocyte-spreading peptide (PSP1), found in Chrysodeixis includens (Soybean looper).